The chain runs to 695 residues: Polyribonucleotide nucleotidyltransferase (695 aa).

Mg(2+) contacts are provided by Asp-486 and Asp-492. In terms of domain architecture, KH spans 553 to 612 (PRIETMQINTSKIATVIGPGGKQIRQIIERSGAQVDINDDGVINIAASTQESINKAKELI). In terms of domain architecture, S1 motif spans 622–690 (GKVYNGRVTS…EKGQLKLSHK (69 aa)).

This sequence belongs to the polyribonucleotide nucleotidyltransferase family. The cofactor is Mg(2+).

The protein localises to the cytoplasm. It carries out the reaction RNA(n+1) + phosphate = RNA(n) + a ribonucleoside 5'-diphosphate. In terms of biological role, involved in mRNA degradation. Catalyzes the phosphorolysis of single-stranded polyribonucleotides processively in the 3'- to 5'-direction. The chain is Polyribonucleotide nucleotidyltransferase from Chlamydia trachomatis serovar A (strain ATCC VR-571B / DSM 19440 / HAR-13).